We begin with the raw amino-acid sequence, 236 residues long: 3-oxoacyl-[acyl-carrier-protein] reductase (236 aa).

Position 1 is an N-acetylmethionine (methionine 1). NADP(+)-binding positions include 11–14 (SRGI) and 34–35 (RN). Position 40 is an N6-acetyllysine (lysine 40). 83 to 85 (AAG) serves as a coordination point for NADP(+). The residue at position 96 (lysine 96) is an N6-acetyllysine. Residue serine 134 coordinates substrate. NADP(+) contacts are provided by residues tyrosine 147, lysine 151, and 180 to 182 (IHT). Tyrosine 147 serves as the catalytic Proton acceptor. The residue at position 194 (lysine 194) is an N6-acetyllysine.

This sequence belongs to the short-chain dehydrogenases/reductases (SDR) family. In terms of assembly, homotetramer (in vitro). Heterotetramer with HSD17B8; contains two molecules each of HSD17B8 and CBR4. Does not form homotetramers when HSD17B8 is coexpressed, only heterotetramers (in vitro).

It is found in the mitochondrion matrix. It catalyses the reaction a (3R)-hydroxyacyl-[ACP] + NADP(+) = a 3-oxoacyl-[ACP] + NADPH + H(+). The enzyme catalyses a quinone + NADPH + H(+) = a quinol + NADP(+). It participates in lipid metabolism; fatty acid biosynthesis. Functionally, component of the heterotetramer complex KAR (3-ketoacyl-[acyl carrier protein] reductase or 3-ketoacyl-[ACP] reductase) that forms part of the mitochondrial fatty acid synthase (mtFAS). Beta-subunit of the KAR heterotetramer complex, responsible for the 3-ketoacyl-ACP reductase activity of the mtFAS, reduces 3-oxoacyl-[ACP] to (3R)-hydroxyacyl-[ACP] in a NADPH-dependent manner with no chain length preference, thereby participating in mitochondrial fatty acid biosynthesis. The homotetramer has NADPH-dependent quinone reductase activity (in vitro), hence could play a role in protection against cytotoxicity of exogenous quinones. As a heterotetramer, it can also reduce 9,10-phenanthrenequinone, 1,4-benzoquinone and various other o-quinones and p-quinones (in vitro). This chain is 3-oxoacyl-[acyl-carrier-protein] reductase (Cbr4), found in Rattus norvegicus (Rat).